Reading from the N-terminus, the 214-residue chain is MTDVVSTEAPALSPLEALGQAIVANSAGAITAWSVAFGELNLLGPANRIVQALTYLRDHPDYRFHQLVDLTGVDYPERERRFDVVYHLLSLIKNHRVRLKVQTDEDTAVPSVTPVFPVADWFEREAFDMYGIFFDGHPDLRRILTDYGFHGHPLRKDFPMTGYVEVRYDDELKRVVYEPVKITEFRAFDFLSPWEGAKYALPGDEKAEKRAGDA.

This sequence belongs to the complex I 30 kDa subunit family. NDH-1 is composed of 14 different subunits. Subunits NuoB, C, D, E, F, and G constitute the peripheral sector of the complex.

The protein localises to the cell inner membrane. It catalyses the reaction a quinone + NADH + 5 H(+)(in) = a quinol + NAD(+) + 4 H(+)(out). NDH-1 shuttles electrons from NADH, via FMN and iron-sulfur (Fe-S) centers, to quinones in the respiratory chain. The immediate electron acceptor for the enzyme in this species is believed to be ubiquinone. Couples the redox reaction to proton translocation (for every two electrons transferred, four hydrogen ions are translocated across the cytoplasmic membrane), and thus conserves the redox energy in a proton gradient. This chain is NADH-quinone oxidoreductase subunit C, found in Caulobacter sp. (strain K31).